Here is a 542-residue protein sequence, read N- to C-terminus: CTP synthase (542 aa).

An amidoligase domain region spans residues 1-265 (MARYIFITGG…DQEVLSAFGI (265 aa)). A CTP-binding site is contributed by Ser-13. Position 13 (Ser-13) interacts with UTP. Position 14–19 (14–19 (SLGKGL)) interacts with ATP. Tyr-54 serves as a coordination point for L-glutamine. Residue Asp-71 participates in ATP binding. Residues Asp-71 and Glu-139 each coordinate Mg(2+). CTP-binding positions include 146–148 (DIE), 186–191 (KTKPTQ), and Lys-222. UTP contacts are provided by residues 186-191 (KTKPTQ) and Lys-222. 238–240 (RDV) contributes to the ATP binding site. The Glutamine amidotransferase type-1 domain maps to 291–541 (TIAIVGKYTG…IAAAMEQSRL (251 aa)). Gly-353 serves as a coordination point for L-glutamine. Cys-380 acts as the Nucleophile; for glutamine hydrolysis in catalysis. L-glutamine-binding positions include 381–384 (FGMQ), Glu-404, and Arg-469. Active-site residues include His-514 and Glu-516.

It belongs to the CTP synthase family. As to quaternary structure, homotetramer.

It catalyses the reaction UTP + L-glutamine + ATP + H2O = CTP + L-glutamate + ADP + phosphate + 2 H(+). It carries out the reaction L-glutamine + H2O = L-glutamate + NH4(+). The enzyme catalyses UTP + NH4(+) + ATP = CTP + ADP + phosphate + 2 H(+). Its pathway is pyrimidine metabolism; CTP biosynthesis via de novo pathway; CTP from UDP: step 2/2. Allosterically activated by GTP, when glutamine is the substrate; GTP has no effect on the reaction when ammonia is the substrate. The allosteric effector GTP functions by stabilizing the protein conformation that binds the tetrahedral intermediate(s) formed during glutamine hydrolysis. Inhibited by the product CTP, via allosteric rather than competitive inhibition. In terms of biological role, catalyzes the ATP-dependent amination of UTP to CTP with either L-glutamine or ammonia as the source of nitrogen. Regulates intracellular CTP levels through interactions with the four ribonucleotide triphosphates. In Beijerinckia indica subsp. indica (strain ATCC 9039 / DSM 1715 / NCIMB 8712), this protein is CTP synthase.